A 225-amino-acid chain; its full sequence is NAD(P)H-quinone oxidoreductase subunit K, chloroplastic (225 aa).

[4Fe-4S] cluster is bound by residues Cys-43, Cys-44, Cys-108, and Cys-139.

It belongs to the complex I 20 kDa subunit family. In terms of assembly, NDH is composed of at least 16 different subunits, 5 of which are encoded in the nucleus. [4Fe-4S] cluster is required as a cofactor.

The protein localises to the plastid. It localises to the chloroplast thylakoid membrane. The catalysed reaction is a plastoquinone + NADH + (n+1) H(+)(in) = a plastoquinol + NAD(+) + n H(+)(out). It catalyses the reaction a plastoquinone + NADPH + (n+1) H(+)(in) = a plastoquinol + NADP(+) + n H(+)(out). NDH shuttles electrons from NAD(P)H:plastoquinone, via FMN and iron-sulfur (Fe-S) centers, to quinones in the photosynthetic chain and possibly in a chloroplast respiratory chain. The immediate electron acceptor for the enzyme in this species is believed to be plastoquinone. Couples the redox reaction to proton translocation, and thus conserves the redox energy in a proton gradient. The chain is NAD(P)H-quinone oxidoreductase subunit K, chloroplastic from Daucus carota (Wild carrot).